We begin with the raw amino-acid sequence, 154 residues long: Ribosomal RNA large subunit methyltransferase H (154 aa).

Positions 71 and 103 each coordinate S-adenosyl-L-methionine.

Belongs to the RNA methyltransferase RlmH family. As to quaternary structure, homodimer.

Its subcellular location is the cytoplasm. The enzyme catalyses pseudouridine(1915) in 23S rRNA + S-adenosyl-L-methionine = N(3)-methylpseudouridine(1915) in 23S rRNA + S-adenosyl-L-homocysteine + H(+). Specifically methylates the pseudouridine at position 1915 (m3Psi1915) in 23S rRNA. This is Ribosomal RNA large subunit methyltransferase H from Solidesulfovibrio magneticus (strain ATCC 700980 / DSM 13731 / RS-1) (Desulfovibrio magneticus).